Consider the following 389-residue polypeptide: 26S proteasome regulatory subunit 6B homolog (389 aa).

175–182 (GPPGTGKT) provides a ligand contact to ATP.

Belongs to the AAA ATPase family.

The protein resides in the cytoplasm. It is found in the nucleus. Functionally, the 26S proteasome is involved in the ATP-dependent degradation of ubiquitinated proteins. The regulatory (or ATPase) complex confers ATP dependency and substrate specificity to the 26S complex. The protein is 26S proteasome regulatory subunit 6B homolog (rpt3) of Schizosaccharomyces pombe (strain 972 / ATCC 24843) (Fission yeast).